The chain runs to 356 residues: tRNA N6-adenosine threonylcarbamoyltransferase (356 aa).

His-115 and His-119 together coordinate Fe cation. Substrate contacts are provided by residues 138–142 (LVSGG), Asp-171, Gly-184, and Asn-283. A Fe cation-binding site is contributed by Asp-311.

Belongs to the KAE1 / TsaD family. It depends on Fe(2+) as a cofactor.

The protein localises to the cytoplasm. The catalysed reaction is L-threonylcarbamoyladenylate + adenosine(37) in tRNA = N(6)-L-threonylcarbamoyladenosine(37) in tRNA + AMP + H(+). In terms of biological role, required for the formation of a threonylcarbamoyl group on adenosine at position 37 (t(6)A37) in tRNAs that read codons beginning with adenine. Is involved in the transfer of the threonylcarbamoyl moiety of threonylcarbamoyl-AMP (TC-AMP) to the N6 group of A37, together with TsaE and TsaB. TsaD likely plays a direct catalytic role in this reaction. The polypeptide is tRNA N6-adenosine threonylcarbamoyltransferase (Synechococcus sp. (strain WH7803)).